Here is a 202-residue protein sequence, read N- to C-terminus: MLVAGFLLALPPSWAAGAPRAGRRPARPRGCADRPEELLEQLYGRLAAGVLSAFHHTLQLGPREQARNASCPAGGRPADRRFRPPTNLRSVSPWAYRISYDPARYPRYLPEAYCLCRGCLTGLFGEEDVRFRSAPVYMPTVVLRRTPACAGGRSVYTEAYVTIPVGCTCVPEPEKDADSINSSIDKQGAKLLLGPNDAPAGP.

The signal sequence occupies residues 1 to 15 (MLVAGFLLALPPSWA). The disordered stretch occupies residues 65–85 (QARNASCPAGGRPADRRFRPP). 2 N-linked (GlcNAc...) asparagine glycosylation sites follow: N68 and N181.

It belongs to the IL-17 family. Expressed preferentially in adipose, skeletal muscle and CNS.

The protein resides in the secreted. In terms of biological role, induces expression of IL6, CXCL8/IL8, and CSF2/GM-CSF from endothelial cells. This Homo sapiens (Human) protein is Interleukin-17D (IL17D).